Reading from the N-terminus, the 262-residue chain is uncharacterized protein (262 aa).

6 residues coordinate a divalent metal cation: His7, His9, Glu96, His132, His156, and Asp211.

The protein belongs to the metallo-dependent hydrolases superfamily. TatD-type hydrolase family. It depends on a divalent metal cation as a cofactor.

This is an uncharacterized protein from Mycoplasma genitalium (strain ATCC 33530 / DSM 19775 / NCTC 10195 / G37) (Mycoplasmoides genitalium).